Reading from the N-terminus, the 650-residue chain is Chaperone protein HtpG (650 aa).

The interval 1 to 344 is a; substrate-binding; sequence MSKHTHSFQA…SADLPLNVSR (344 aa). The segment at 345-582 is b; it reads ELLQESRDVR…DGGMSTQLAR (238 aa). Residues 583-650 are c; the sequence is LLKQAGQSAP…YVKRVNALLA (68 aa).

Belongs to the heat shock protein 90 family. As to quaternary structure, homodimer.

Its subcellular location is the cytoplasm. Its function is as follows. Molecular chaperone. Has ATPase activity. The polypeptide is Chaperone protein HtpG (Acidovorax sp. (strain JS42)).